A 475-amino-acid polypeptide reads, in one-letter code: Ribulose bisphosphate carboxylase large chain (475 aa).

Positions 1 to 2 (MS) are excised as a propeptide. Pro-3 is subject to N-acetylproline. Position 14 is an N6,N6,N6-trimethyllysine (Lys-14). The substrate site is built by Asn-123 and Thr-173. Residue Lys-175 is the Proton acceptor of the active site. Lys-177 is a substrate binding site. Mg(2+)-binding residues include Lys-201, Asp-203, and Glu-204. Position 201 is an N6-carboxylysine (Lys-201). His-294 functions as the Proton acceptor in the catalytic mechanism. Residues Arg-295, His-327, and Ser-379 each contribute to the substrate site.

This sequence belongs to the RuBisCO large chain family. Type I subfamily. In terms of assembly, heterohexadecamer of 8 large chains and 8 small chains; disulfide-linked. The disulfide link is formed within the large subunit homodimers. Mg(2+) is required as a cofactor. Post-translationally, the disulfide bond which can form in the large chain dimeric partners within the hexadecamer appears to be associated with oxidative stress and protein turnover.

Its subcellular location is the plastid. The protein localises to the chloroplast. It catalyses the reaction 2 (2R)-3-phosphoglycerate + 2 H(+) = D-ribulose 1,5-bisphosphate + CO2 + H2O. The enzyme catalyses D-ribulose 1,5-bisphosphate + O2 = 2-phosphoglycolate + (2R)-3-phosphoglycerate + 2 H(+). In terms of biological role, ruBisCO catalyzes two reactions: the carboxylation of D-ribulose 1,5-bisphosphate, the primary event in carbon dioxide fixation, as well as the oxidative fragmentation of the pentose substrate in the photorespiration process. Both reactions occur simultaneously and in competition at the same active site. In Pinus krempfii (Krempf's pine), this protein is Ribulose bisphosphate carboxylase large chain.